The chain runs to 350 residues: 3-isopropylmalate dehydrogenase (350 aa).

NAD(+) is bound at residue 76-87 (GPKWDNAPKRPE). Arg-94, Arg-104, Arg-132, and Asp-217 together coordinate substrate. Mg(2+)-binding residues include Asp-217, Asp-241, and Asp-245. 275 to 287 (GSAPDIANQNIAN) provides a ligand contact to NAD(+).

This sequence belongs to the isocitrate and isopropylmalate dehydrogenases family. LeuB type 1 subfamily. In terms of assembly, homodimer. The cofactor is Mg(2+). Requires Mn(2+) as cofactor.

The protein resides in the cytoplasm. The catalysed reaction is (2R,3S)-3-isopropylmalate + NAD(+) = 4-methyl-2-oxopentanoate + CO2 + NADH. Its pathway is amino-acid biosynthesis; L-leucine biosynthesis; L-leucine from 3-methyl-2-oxobutanoate: step 3/4. Catalyzes the oxidation of 3-carboxy-2-hydroxy-4-methylpentanoate (3-isopropylmalate) to 3-carboxy-4-methyl-2-oxopentanoate. The product decarboxylates to 4-methyl-2 oxopentanoate. The polypeptide is 3-isopropylmalate dehydrogenase (Listeria innocua serovar 6a (strain ATCC BAA-680 / CLIP 11262)).